Consider the following 507-residue polypeptide: Dihydrolipoyl dehydrogenase 2, mitochondrial (507 aa).

The transit peptide at 1 to 36 directs the protein to the mitochondrion; that stretch reads MAMASLARRKAYFLTRNISNSPTDAFRFSFSLTRGF. FAD is bound by residues 73–82, Lys91, Gly155, and 184–186; these read EKRGALGGTC and TGS. Residues Cys82 and Cys87 are joined by a disulfide bond. NAD(+)-binding positions include 221–228, Glu244, Val278, and Gly313; that span reads GAGYIGLE. Residues Asp354 and 360–363 each bind FAD; that span reads MLAH. His486 serves as the catalytic Proton acceptor.

The protein belongs to the class-I pyridine nucleotide-disulfide oxidoreductase family. As to quaternary structure, homodimer. Part of both the glycine cleavage system composed of four proteins: P, T, L and H and of the pyruvate dehydrogenase complex containing multiple copies of three enzymatic components: pyruvate dehydrogenase (E1), dihydrolipoamide acetyltransferase (E2) and lipoamide dehydrogenase (E3). Requires FAD as cofactor. In terms of processing, S-nytrosylated at unknown positions. In terms of tissue distribution, preferentially expressed in roots, flowers and siliques and at a lower level in stems and leaves.

The protein resides in the mitochondrion matrix. The catalysed reaction is N(6)-[(R)-dihydrolipoyl]-L-lysyl-[protein] + NAD(+) = N(6)-[(R)-lipoyl]-L-lysyl-[protein] + NADH + H(+). In terms of biological role, lipoamide dehydrogenase is a component of the glycine decarboxylase (GDC) or glycine cleavage system as well as of the alpha-ketoacid dehydrogenase complexes. LPD1 is probably the protein most often associated with the glycine decarboxylase complex while LPD2 is probably incorporated into alpha-ketoacid dehydrogenase complexes. The sequence is that of Dihydrolipoyl dehydrogenase 2, mitochondrial (LPD2) from Arabidopsis thaliana (Mouse-ear cress).